A 299-amino-acid chain; its full sequence is Sodium/potassium-transporting ATPase subunit beta-2 (299 aa).

The Cytoplasmic segment spans residues 1-36 (MAALTQKKTCSQMMEEWKEFMWNPRTREFMGRTGSS). The helical; Signal-anchor for type II membrane protein transmembrane segment at 37 to 57 (WALILLFYVVFYAFLTAVFSL) threads the bilayer. At 58–299 (SLWVMLQTID…VIFTMKIDRL (242 aa)) the chain is on the extracellular side. Asn101 and Asn119 each carry an N-linked (GlcNAc...) asparagine glycan. Cystine bridges form between Cys130-Cys152 and Cys162-Cys178. Residues Asn199, Asn226, Asn247, and Asn259 are each glycosylated (N-linked (GlcNAc...) asparagine). The cysteines at positions 206 and 270 are disulfide-linked.

The protein belongs to the X(+)/potassium ATPases subunit beta family. The sodium/potassium-transporting ATPase is composed of a catalytic alpha subunit, an auxiliary non-catalytic beta subunit and an additional regulatory subunit. Expressed at a high level in bladder epithelial cells and eye and at a trace level in kidney; it is not detectable in significant amounts in the stomach, colon and small intestine.

It is found in the cell membrane. This is the non-catalytic component of the active enzyme, which catalyzes the hydrolysis of ATP coupled with the exchange of Na(+) and K(+) ions across the plasma membrane. The exact function of this glycoprotein is not known. Some specific sequence of the beta subunit can modulate the activation of the Na,K-pump by extracellular potassium ions. This chain is Sodium/potassium-transporting ATPase subunit beta-2, found in Rhinella marina (Cane toad).